We begin with the raw amino-acid sequence, 138 residues long: Basic phospholipase A2 beta-bungarotoxin A-AL3 chain (138 aa).

The first 10 residues, Leu-1 to Ala-10, serve as a signal peptide directing secretion. Residues Ala-11–Leu-18 constitute a propeptide that is removed on maturation. 6 disulfide bridges follow: Cys-45-Cys-137, Cys-47-Cys-63, Cys-62-Cys-118, Cys-69-Cys-111, Cys-79-Cys-104, and Cys-97-Cys-109. Residues Tyr-46, Gly-48, and Gly-50 each coordinate Ca(2+). His-66 is an active-site residue. Asp-67 contacts Ca(2+). Asp-112 is an active-site residue.

It belongs to the phospholipase A2 family. Group I subfamily. D49 sub-subfamily. Heterodimer; disulfide-linked. The A chains have phospholipase A2 activity and the B chains show homology with the basic protease inhibitors. The cofactor is Ca(2+). Expressed by the venom gland.

It localises to the secreted. It catalyses the reaction a 1,2-diacyl-sn-glycero-3-phosphocholine + H2O = a 1-acyl-sn-glycero-3-phosphocholine + a fatty acid + H(+). In terms of biological role, snake venom phospholipase A2 (PLA2) that inhibits neuromuscular transmission by blocking acetylcholine release from the nerve termini. PLA2 catalyzes the calcium-dependent hydrolysis of the 2-acyl groups in 3-sn-phosphoglycerides. This Bungarus multicinctus (Many-banded krait) protein is Basic phospholipase A2 beta-bungarotoxin A-AL3 chain.